Here is a 907-residue protein sequence, read N- to C-terminus: Glutamate receptor 1 (907 aa).

The first 18 residues, 1–18 (MPYIFAFFCTGFLGAVVG), serve as a signal peptide directing secretion. Residues 19-536 (ANFPNNIQIG…GVFSFLDPLA (518 aa)) are Extracellular-facing. N-linked (GlcNAc...) asparagine glycosylation is found at N63, N249, N257, N363, N401, and N406. A disulfide bond links C75 and C323. P492, T494, and R499 together coordinate L-glutamate. A helical transmembrane segment spans residues 537-557 (YEIWMCIVFAYIGVSVVLFLV). The Cytoplasmic portion of the chain corresponds to 558–584 (SRFSPYEWHSEEFEEGRDQTTSDQSNE). The segment at residues 585–600 (FGIFNSLWFSLGAFMQ) is an intramembrane region (helical; Pore-forming). Residues 601–603 (QGC) lie within the membrane without spanning it. A lipid anchor (S-palmitoyl cysteine) is attached at C603. The Cytoplasmic portion of the chain corresponds to 604–609 (DISPRS). A helical membrane pass occupies residues 610-630 (LSGRIVGGVWWFFTLIIISSY). Residues 631-805 (TANLAAFLTV…DKTSALSLSN (175 aa)) are Extracellular-facing. S645 is subject to Phosphoserine. L-glutamate-binding residues include S668 and T669. S710 carries the post-translational modification Phosphoserine. E719 contacts L-glutamate. C732 and C787 are joined by a disulfide. A helical membrane pass occupies residues 806-826 (VAGVFYILIGGLGLAMLVALI). Residues 827–907 (EFCYKSRSES…SGMPLGATGL (81 aa)) lie on the Cytoplasmic side of the membrane. A lipid anchor (S-palmitoyl cysteine) is attached at C829. A phosphoserine mark is found at S849 and S863. Positions 857 to 881 (STLPRNSGAGASGGSGSGENGRVVS) are disordered. Residues 866–875 (GASGGSGSGE) are compositionally biased toward gly residues. A PDZ-binding motif is present at residues 904-907 (ATGL).

Belongs to the glutamate-gated ion channel (TC 1.A.10.1) family. GRIA1 subfamily. As to quaternary structure, homotetramer or heterotetramer of pore-forming glutamate receptor subunits. Heteromeric assembly can be the result of both receptor subtype and flip or flop form and according the composition, one partner can be dominant with respect to the fast desensitizing current component, whereas the other can determine the steady-state component. Tetramers may be formed by the dimerization of dimers. Found in a complex with GRIA2, GRIA3, GRIA4, CNIH2, CNIH3, CACNG2, CACNG3, CACNG4, CACNG5, CACNG7 and CACNG8. Interacts with HIP1 and RASGRF2. Interacts with SYNDIG1 and GRIA2. Interacts with DLG1 (via C-terminus). Interacts with LRFN1. Interacts with PRKG2. Interacts with CNIH2 and CACNG2. Interacts with CACNG5; this interaction modulates the gating. Interacts (via C-terminus) with PDLIM4 (via LIM domain); this interaction as well as the interaction of PDLIM4 with alpha-actinin is required for their colocalization in early endosomes. Interacts with SNX27 (via PDZ domain); the interaction is required for recycling to the plasma membrane when endocytosed and prevent degradation in lysosomes. Interacts (via PDZ-binding motif) with SHANK3 (via PDZ domain). Interacts with CACNG3; associates GRIA1 with the adapter protein complex 4 (AP-4) to target GRIA1 to the somatodendritic compartment of neurons. Interacts with CACNG2; this interaction mediates traffick to the plasma membrane and modulation of desensitization. Interacts with CNIH2 and CNIH3; this interaction promotes expression at the plasma membrane and extensively modulates their gating properties by slowing deactivation and desensitization kinetics. Found in a complex with GRIA2, GRIA3, GRIA4, DLG4, CACNG8 and CNIH2. Phosphorylated at Ser-645. Phosphorylated at Ser-710 by PKC. Phosphorylated at Ser-849 by PKC, PKA and CAMK2. Phosphorylated at Ser-863 by PKC, PKA and PRKG2. Phosphorylation of Ser-863 is reduced by induction of long-term depression and increased by induction of long-term potentiation. Post-translationally, palmitoylated. Depalmitoylated by CPT1C and upon L-glutamate stimulation. ZDHHC3/GODZ specifically palmitoylates Cys-603, which leads to Golgi retention and decreased cell surface expression. In contrast, Cys-829 palmitoylation does not affect cell surface expression but regulates stimulation-dependent endocytosis. Expressed in the outer plexiform layer of the retina of the eye (at protein level). Expressed in the forebrain and hippocampus (at protein level).

Its subcellular location is the cell membrane. It localises to the endoplasmic reticulum membrane. The protein localises to the postsynaptic cell membrane. It is found in the postsynaptic density membrane. The protein resides in the cell projection. Its subcellular location is the dendrite. It localises to the dendritic spine. The protein localises to the early endosome membrane. It is found in the recycling endosome membrane. The protein resides in the presynapse. Its subcellular location is the synapse. It catalyses the reaction Ca(2+)(in) = Ca(2+)(out). The enzyme catalyses Na(+)(in) = Na(+)(out). It carries out the reaction Mg(2+)(in) = Mg(2+)(out). The catalysed reaction is Li(+)(in) = Li(+)(out). It catalyses the reaction K(+)(in) = K(+)(out). The enzyme catalyses Sr(2+)(in) = Sr(2+)(out). Its function is as follows. Ionotropic glutamate receptor that functions as a ligand-gated cation channel, gated by L-glutamate and glutamatergic agonists such as alpha-amino-3-hydroxy-5-methyl-4-isoxazolepropionic acid (AMPA), quisqualic acid, and kainic acid. L-glutamate acts as an excitatory neurotransmitter at many synapses in the central nervous system. Binding of the excitatory neurotransmitter L-glutamate induces a conformation change, leading to the opening of the cation channel, and thereby converts the chemical signal to an electrical impulse upon entry of monovalent and divalent cations such as sodium and calcium. The receptor then desensitizes rapidly and enters in a transient inactive state, characterized by the presence of bound agonist. In the presence of CACNG2 or CACNG4 or CACNG7 or CACNG8, shows resensitization which is characterized by a delayed accumulation of current flux upon continued application of L-glutamate. Calcium (Ca(2+)) permeability depends on subunits composition and, heteromeric channels containing edited GRIA2 subunit are calcium-impermeable. Also permeable to other divalents cations such as strontium(2+) and magnesium(2+) and monovalent cations such as potassium(1+) and lithium(1+). This chain is Glutamate receptor 1, found in Mus musculus (Mouse).